The following is a 260-amino-acid chain: MNGPVRTEPLHGEIPLLASSGSYSVVVLLRGYAEPQGAGDAVRADGTVTLVLPRGWASDSSRGLAPSADGGSKTALEEAVRGPILVDTGGPWARGALLEALATQGVAPEDVTLVVGTHGHSDHIGNLGLFPEAALLVSHDFCLPEGLYLPHGLCETQPLILGSGLQVWATPGHGGQRDVSVVVEGTSLGTVVVAGDVFERLGDEDSWQALSEDPVAQQRSRERILSVADVVVPGHGAPFRVVRETVKSSEDLICEGKAVA.

Residues His-118, His-120, Asp-122, His-123, His-173, Asp-196, and His-235 each contribute to the Zn(2+) site.

It belongs to the metallo-beta-lactamase superfamily. Glyoxalase II family. As to quaternary structure, homodimer. Requires Zn(2+) as cofactor.

Its subcellular location is the cytoplasm. It localises to the cytosol. It is found in the nucleus. The enzyme catalyses a ribonucleotidyl-ribonucleotide-RNA + H2O = a 3'-end ribonucleotide-RNA + a 5'-end 5'-phospho-ribonucleoside-RNA + H(+). Endoribonuclease that catalyzes the hydrolysis of histone-coding pre-mRNA 3'-end. Involved in histone pre-mRNA processing during the S-phase of the cell cycle, which is required for entering/progressing through S-phase. Cleaves histone pre-mRNA at a major and a minor cleavage site after the 5'-ACCCA-3' and the 5'-ACCCACA-3' sequence, respectively, and located downstream of the stem-loop. May require the presence of the HDE element located at the histone pre-RNA 3'-end to avoid non-specific cleavage. In Mus musculus (Mouse), this protein is Metallo-beta-lactamase domain-containing protein 1.